The sequence spans 128 residues: Azurin (128 aa).

One can recognise a Plastocyanin-like domain in the interval 1-128 (AECSVDIQGN…AMMKGTLTLK (128 aa)). Cu cation is bound by residues His46, Cys112, His117, and Met121.

It localises to the periplasm. Functionally, transfers electrons from cytochrome c551 to cytochrome oxidase. The polypeptide is Azurin (Pseudomonas denitrificans).